The chain runs to 968 residues: RNA polymerase-associated protein RapA (968 aa).

Residues 164-334 (DVGRRHAPRV…FARLRLLDPN (171 aa)) form the Helicase ATP-binding domain. 177-184 (DEVGLGKT) contacts ATP. Residues 280 to 283 (DEAH) carry the DEAH box motif. One can recognise a Helicase C-terminal domain in the interval 490–662 (RVEWLMGYLT…YLASPDQTEG (173 aa)).

Belongs to the SNF2/RAD54 helicase family. RapA subfamily. Interacts with the RNAP. Has a higher affinity for the core RNAP than for the holoenzyme. Its ATPase activity is stimulated by binding to RNAP.

Transcription regulator that activates transcription by stimulating RNA polymerase (RNAP) recycling in case of stress conditions such as supercoiled DNA or high salt concentrations. Probably acts by releasing the RNAP, when it is trapped or immobilized on tightly supercoiled DNA. Does not activate transcription on linear DNA. Probably not involved in DNA repair. The sequence is that of RNA polymerase-associated protein RapA from Shigella flexneri serotype 5b (strain 8401).